Consider the following 339-residue polypeptide: DNA-directed RNA polymerase subunit alpha (339 aa).

The segment at 1–233 (MVREEVAGST…DLFLPFLHAE (233 aa)) is alpha N-terminal domain (alpha-NTD). The interval 264–339 (KKGIPLNCIF…IDLLKNKLSF (76 aa)) is alpha C-terminal domain (alpha-CTD).

Belongs to the RNA polymerase alpha chain family. In plastids the minimal PEP RNA polymerase catalytic core is composed of four subunits: alpha, beta, beta', and beta''. When a (nuclear-encoded) sigma factor is associated with the core the holoenzyme is formed, which can initiate transcription.

The protein localises to the plastid. It is found in the chloroplast. The enzyme catalyses RNA(n) + a ribonucleoside 5'-triphosphate = RNA(n+1) + diphosphate. DNA-dependent RNA polymerase catalyzes the transcription of DNA into RNA using the four ribonucleoside triphosphates as substrates. The sequence is that of DNA-directed RNA polymerase subunit alpha from Elymus californicus (California bottlebrush grass).